Here is a 386-residue protein sequence, read N- to C-terminus: Succinate--CoA ligase [ADP-forming] subunit beta (386 aa).

Residues 9–244 enclose the ATP-grasp domain; sequence KALLRAAGIK…TTQEDHRETQ (236 aa). ATP-binding positions include Lys-46, 53-55, Glu-100, and Arg-103; that span reads GRG. Mg(2+) contacts are provided by Asn-199 and Asp-213. Substrate-binding positions include Asn-264 and 321-323; that span reads GIV.

Belongs to the succinate/malate CoA ligase beta subunit family. Heterotetramer of two alpha and two beta subunits. Mg(2+) serves as cofactor.

It carries out the reaction succinate + ATP + CoA = succinyl-CoA + ADP + phosphate. It catalyses the reaction GTP + succinate + CoA = succinyl-CoA + GDP + phosphate. The protein operates within carbohydrate metabolism; tricarboxylic acid cycle; succinate from succinyl-CoA (ligase route): step 1/1. Functionally, succinyl-CoA synthetase functions in the citric acid cycle (TCA), coupling the hydrolysis of succinyl-CoA to the synthesis of either ATP or GTP and thus represents the only step of substrate-level phosphorylation in the TCA. The beta subunit provides nucleotide specificity of the enzyme and binds the substrate succinate, while the binding sites for coenzyme A and phosphate are found in the alpha subunit. The chain is Succinate--CoA ligase [ADP-forming] subunit beta from Dichelobacter nodosus (strain VCS1703A).